Here is a 220-residue protein sequence, read N- to C-terminus: MKKQLVLFCDFDGTITENDNIIAIMKQFAPPEWEALKDDILAERLSVQEGVGKMFSLLPSALKDEIVDFLLSTARLREGFREFVAFTKEKGIPLYIVSGGIDFFVYPMLDGLIDKERIFCNGSDFSSEMIRITWPHACDGKCQNGCGCCKPSLLRKLARPDGYHVVIGDSITDLAVAKQADYVLARDFLLKKCQELDLPHAPFTTFFDVVDHLQRLEVIA.

The protein belongs to the HAD-like hydrolase superfamily. MtnX family.

The catalysed reaction is 2-hydroxy-5-methylsulfanyl-3-oxopent-1-enyl phosphate + H2O = 1,2-dihydroxy-5-(methylsulfanyl)pent-1-en-3-one + phosphate. It functions in the pathway amino-acid biosynthesis; L-methionine biosynthesis via salvage pathway; L-methionine from S-methyl-5-thio-alpha-D-ribose 1-phosphate: step 4/6. Functionally, dephosphorylates 2-hydroxy-3-keto-5-methylthiopentenyl-1-phosphate (HK-MTPenyl-1-P) yielding 1,2-dihydroxy-3-keto-5-methylthiopentene (DHK-MTPene). The protein is 2-hydroxy-3-keto-5-methylthiopentenyl-1-phosphate phosphatase of Geobacillus thermodenitrificans (strain NG80-2).